The following is a 490-amino-acid chain: ABC transporter ATP-binding protein ModF (490 aa).

ABC transporter domains follow at residues 4–235 (LQIL…AHSE) and 261–489 (IVLN…LTKI). Residues 36–43 (GSNGSGKS) and 293–300 (GPNGAGKS) contribute to the ATP site.

The protein belongs to the ABC transporter superfamily.

The protein localises to the cell inner membrane. Functionally, probably not involved in the transport of molybdenum into the cell. This is ABC transporter ATP-binding protein ModF (modF) from Escherichia coli (strain K12).